The sequence spans 235 residues: Peptidyl-tRNA hydrolase (235 aa).

A tRNA-binding site is contributed by Tyr-14. His-19 serves as the catalytic Proton acceptor. TRNA is bound by residues Phe-64, Asn-66, and Asn-112. Residues 188–235 are disordered; sequence APARNSGTRPDNPGKGSPEKPAAKPANDPIAEPPSLSDRLRALTERFR. A compositionally biased stretch (basic and acidic residues) spans 225–235; that stretch reads DRLRALTERFR.

This sequence belongs to the PTH family. As to quaternary structure, monomer.

It localises to the cytoplasm. The enzyme catalyses an N-acyl-L-alpha-aminoacyl-tRNA + H2O = an N-acyl-L-amino acid + a tRNA + H(+). Hydrolyzes ribosome-free peptidyl-tRNAs (with 1 or more amino acids incorporated), which drop off the ribosome during protein synthesis, or as a result of ribosome stalling. Functionally, catalyzes the release of premature peptidyl moieties from peptidyl-tRNA molecules trapped in stalled 50S ribosomal subunits, and thus maintains levels of free tRNAs and 50S ribosomes. In Paracoccus denitrificans (strain Pd 1222), this protein is Peptidyl-tRNA hydrolase.